Here is a 61-residue protein sequence, read N- to C-terminus: Small ribosomal subunit protein uS14 (61 aa).

Residues Cys-24, Cys-27, Cys-40, and Cys-43 each coordinate Zn(2+).

This sequence belongs to the universal ribosomal protein uS14 family. Zinc-binding uS14 subfamily. As to quaternary structure, part of the 30S ribosomal subunit. Contacts proteins S3 and S10. Zn(2+) serves as cofactor.

In terms of biological role, binds 16S rRNA, required for the assembly of 30S particles and may also be responsible for determining the conformation of the 16S rRNA at the A site. The chain is Small ribosomal subunit protein uS14 from Deinococcus deserti (strain DSM 17065 / CIP 109153 / LMG 22923 / VCD115).